Reading from the N-terminus, the 479-residue chain is Aspartyl/glutamyl-tRNA(Asn/Gln) amidotransferase subunit B (479 aa).

This sequence belongs to the GatB/GatE family. GatB subfamily. As to quaternary structure, heterotrimer of A, B and C subunits.

The catalysed reaction is L-glutamyl-tRNA(Gln) + L-glutamine + ATP + H2O = L-glutaminyl-tRNA(Gln) + L-glutamate + ADP + phosphate + H(+). The enzyme catalyses L-aspartyl-tRNA(Asn) + L-glutamine + ATP + H2O = L-asparaginyl-tRNA(Asn) + L-glutamate + ADP + phosphate + 2 H(+). Allows the formation of correctly charged Asn-tRNA(Asn) or Gln-tRNA(Gln) through the transamidation of misacylated Asp-tRNA(Asn) or Glu-tRNA(Gln) in organisms which lack either or both of asparaginyl-tRNA or glutaminyl-tRNA synthetases. The reaction takes place in the presence of glutamine and ATP through an activated phospho-Asp-tRNA(Asn) or phospho-Glu-tRNA(Gln). The chain is Aspartyl/glutamyl-tRNA(Asn/Gln) amidotransferase subunit B from Streptococcus pyogenes serotype M12 (strain MGAS2096).